The chain runs to 80 residues: Nuclear protein 1 (80 aa).

Disordered stretches follow at residues 1 to 21 (MATL…EDED) and 38 to 80 (VGGG…KAWR). Basic and acidic residues predominate over residues 61-80 (GHERKLLTKFQNSERKKAWR). Residues 64–80 (RKLLTKFQNSERKKAWR) carry the Nuclear localization signal motif.

Belongs to the NUPR family. Monomer. Directly interacts with MSL1 and binds MORF4L1, two components of histone acetyltransferase complex; the interaction with MORF4L1 may be mediated by MSL1. Interacts with EP300; this interaction enhances the effect of EP300 on PAX2 transcription factor activity. Interacts with PAXIP1; this interaction prevents PAXIP1 inhibition of PAX2 transcription factor activity. Interacts with COPS5; this interaction allows COPS5-dependent CDKN1B nuclear to cytoplasm translocation. Interacts with RNF2. Interacts with FOXO3; this interaction represses FOXO3 transactivation. Interacts with PTMA; regulates apoptotic process. Interacts with MYOD1, EP300 and DDX5; this interaction coordinates the association of anti-proliferative and pro-myogenic proteins at the myogenin promoter. Interacts with TP53; interaction is stress-dependent. Forms a complex with EP300 and TP53; this complex binds CDKN1A promoter leading to transcriptional induction of CDKN1A. Phosphorylated. Phosphorylation promotes DNA-binding activity. In terms of processing, acetylated. In terms of tissue distribution, highly expressed in pancreas and both ovaries and testes.

The protein localises to the nucleus. It localises to the cytoplasm. The protein resides in the perinuclear region. Its function is as follows. Transcription regulator that converts stress signals into a program of gene expression that empowers cells with resistance to the stress induced by a change in their microenvironment. Thereby participates in the regulation of many processes namely cell-cycle, apoptosis, autophagy and DNA repair responses. Controls cell cycle progression and protects cells from genotoxic stress induced by doxorubicin through the complex formation with TP53 and EP300 that binds CDKN1A promoter leading to transcriptional induction of CDKN1A. Protects pancreatic cancer cells from stress-induced cell death by binding the RELB promoter and activating its transcription, leading to IER3 transactivation. Negatively regulates apoptosis through interaction with PTMA. Inhibits autophagy-induced apoptosis in cardiac cells through FOXO3 interaction, inducing cytoplasmic translocation of FOXO3 thereby preventing the FOXO3 association with the pro-autophagic BNIP3 promoter. Inhibits cell growth and facilitates programmed cell death by apoptosis after adriamycin-induced DNA damage through transactivation of TP53. Regulates methamphetamine-induced apoptosis and autophagy through DDIT3-mediated endoplasmic reticulum stress pathway. Participates in DNA repair following gamma-irradiation by facilitating DNA access of the transcription machinery through interaction with MSL1 leading to inhibition of histone H4' Lys-16' acetylation (H4K16ac). Coactivator of PAX2 transcription factor activity, both by recruiting the EP300 cofactor to increase PAX2 transcription factor activity and by binding PAXIP1 to suppress PAXIP1-induced inhibition on PAX2. Positively regulates cell cycle progression through interaction with COPS5 inducing cytoplasmic translocation of CDKN1B leading to the CDKN1B degradation. Coordinates, through its interaction with EP300, the assiociation of MYOD1, EP300 and DDX5 to the MYOG promoter, leading to inhibition of cell-cycle progression and myogenic differentiation promotion. Negatively regulates beta cell proliferation via inhibition of cell-cycle regulatory genes expression through the suppression of their promoter activities. Also required for LHB expression and ovarian maturation. Exacerbates CNS inflammation and demyelination upon cuprizone treatment. In Mus musculus (Mouse), this protein is Nuclear protein 1.